We begin with the raw amino-acid sequence, 362 residues long: Protein RAFTIN 1B (362 aa).

The signal sequence occupies residues M1 to G20. Residues S58–G94 form a disordered region. A compositionally biased stretch (basic and acidic residues) spans R63 to S86. N-linked (GlcNAc...) asparagine glycosylation is present at N102. Residues F142–N356 form the BURP domain.

As to expression, specifically expressed in anthers, in the tapetum and microspores (at protein level).

Its function is as follows. Required for pollen development. Probably synthesized in the tapetum, packaged in Ubisch bodies and transported at appropriate stages to the micropsores. This chain is Protein RAFTIN 1B (RAFTIN1B), found in Triticum aestivum (Wheat).